Consider the following 1465-residue polypeptide: Claspin (1465 aa).

Positions 1–12 are enriched in low complexity; that stretch reads MSESLAETAAAA. Disordered regions lie at residues 1-490, 544-566, and 585-636; these read MSES…KAKV, ATALAGGSPMPSRQPRKSVGLRM, and ATEF…TEDM. A phosphoserine mark is found at serine 45, serine 49, serine 52, serine 64, serine 75, serine 109, and serine 114. Residues 121–133 show a composition bias toward basic and acidic residues; sequence QAEKKTQKEEGKQ. The segment covering 154–163 has biased composition (basic residues); that stretch reads KSNKTKKAVK. Residues 205–216 are compositionally biased toward basic and acidic residues; that stretch reads EYDHHQQHEKPA. A compositionally biased stretch (basic residues) spans 217 to 228; it reads KTQKSKKLAKKQ. Composition is skewed to basic and acidic residues over residues 229-246, 254-263, 273-286, and 296-335; these read KQQEDDKEDNGTEQEKKK, KKSDKSKIDS, EDLKMYQEDQEPQK, and TNKDSKEESGEDQEHQEQKKPLKKIKLDNIDTKEDKEQIV. Residues 260–281 are a coiled coil; the sequence is KIDSLMDNEEDAGEDLKMYQED. Residues 336–346 are compositionally biased toward basic residues; sequence KPKKMAKKNKQ. Phosphoserine occurs at positions 350 and 354. Over residues 358–373 the composition is skewed to basic and acidic residues; that stretch reads QNEKVDQDHDLKKMSS. Residues 375–388 show a composition bias toward acidic residues; the sequence is NELEMGSDKEDQEM. Residues serine 381, serine 404, serine 406, serine 432, serine 434, serine 444, serine 456, serine 458, and serine 468 each carry the phosphoserine modification. The segment covering 400 to 417 has biased composition (basic and acidic residues); it reads QRMDSESEDEIPKTESEK. Over residues 432–441 the composition is skewed to acidic residues; it reads SESEPEETAE. Positions 456-470 are enriched in acidic residues; the sequence is SESEPELDNPEESAG. Residues 564 to 587 are a coiled coil; that stretch reads LRMTREELEAYAKLMEDRAKEATE. The span at 594–606 shows a compositional bias: acidic residues; sequence ESDEEDDSENEEP. Threonine 693 carries the phosphothreonine modification. Positions 839–874 form a coiled coil; the sequence is LITKKRMEDLRKKQAEEQEKMAEDEEEGMDVDEEYE. Positions 845–859 are enriched in basic and acidic residues; sequence MEDLRKKQAEEQEKM. Residues 845–977 form a disordered region; that stretch reads MEDLRKKQAE…LDLLQTPKPS (133 aa). 3 stretches are compositionally biased toward acidic residues: residues 860-875, 913-942, and 960-969; these read AEDEEEGMDVDEEYEP, ADEDPEDNPVEDSEDEKNDSESEQECEANP, and DDNSDEDDLD. Serine 963 carries the phosphoserine modification. Threonine 973 is modified (phosphothreonine). A Phosphoserine modification is found at serine 990. A disordered region spans residues 1058-1154; it reads CSGTFATQLP…AEPVEEIPET (97 aa). Low complexity predominate over residues 1067 to 1076; sequence PSQAPTQQPE. Serine 1093 and serine 1094 each carry phosphoserine. Acidic residues predominate over residues 1094–1103; the sequence is SDEEAQEDAL. A compositionally biased stretch (basic residues) spans 1109-1123; sequence RNKKLTKKRPKKKAK. The span at 1127–1154 shows a compositional bias: acidic residues; sequence SDDEDSDDEVEEFDEESDAEPVEEIPET. A Phosphoserine modification is found at serine 1287.

Belongs to the claspin family. Post-translationally, phosphorylated in response to DNA damage by IR and HU treatment. Phosphorylation does not require mei-41 or tefu. Detected in the ovary but not in the testis (at protein level).

Its subcellular location is the nucleus. Functionally, required for checkpoint signaling in response to DNA replication stress; either resulting from normal embryogenesis or induced by the DNA synthesis inhibitor hydroxyurea (HU). It is not required for the G2 arrest resulting from DNA double strand breaks induced by ionizing irradiation (IR). Necessary for the timely phosphorylation of Cdk1 at the mid-blastula transition. May have a minor role in maintaining genomic stability in mitotic cells. In Drosophila melanogaster (Fruit fly), this protein is Claspin.